The chain runs to 222 residues: DUF1769 family protein (222 aa).

Belongs to the UPF0590 family.

The protein resides in the cytoplasm. It localises to the nucleus. In Schizosaccharomyces pombe (strain 972 / ATCC 24843) (Fission yeast), this protein is DUF1769 family protein.